A 110-amino-acid chain; its full sequence is U-scoloptoxin(16)-Er6a (110 aa).

The signal sequence occupies residues 1–26 (MTSTRKLSVSCLIVFMVSSLIAVSSG).

Belongs to the scoloptoxin-16 family. Post-translationally, contains 4 disulfide bonds. As to expression, expressed by the venom gland.

It localises to the secreted. The polypeptide is U-scoloptoxin(16)-Er6a (Ethmostigmus rubripes (Giant centipede)).